Reading from the N-terminus, the 577-residue chain is Arginine--tRNA ligase (577 aa).

Positions 122 to 132 (PNVAKEMHVGH) match the 'HIGH' region motif.

This sequence belongs to the class-I aminoacyl-tRNA synthetase family. As to quaternary structure, monomer.

It localises to the cytoplasm. The catalysed reaction is tRNA(Arg) + L-arginine + ATP = L-arginyl-tRNA(Arg) + AMP + diphosphate. The protein is Arginine--tRNA ligase of Escherichia coli O7:K1 (strain IAI39 / ExPEC).